A 210-amino-acid chain; its full sequence is Ovomucoid (210 aa).

Positions M1–G24 are cleaved as a signal peptide. 3 Kazal-like domains span residues A25 to E88, T89 to K153, and A156 to C210. Cystine bridges form between C29–C68, C46–C65, and C54–C86. A glycan (N-linked (GlcNAc...) asparagine) is linked at N34. N-linked (GlcNAc...) asparagine glycans are attached at residues N77, N93, and N99. Disulfide bonds link C94/C133, C111/C130, C119/C151, C162/C192, C170/C189, and C178/C210. A glycan (N-linked (GlcNAc...) asparagine; partial) is linked at N199.

It is found in the secreted. Its function is as follows. Serine protease inhibitor. Inhibits trypsin. This Gallus gallus (Chicken) protein is Ovomucoid.